We begin with the raw amino-acid sequence, 235 residues long: Myelin protein zero-like protein 3 (235 aa).

The signal sequence occupies residues 1–31 (MQQRGAAGSRGCALFPLLGVLFFQGVYIVFS). Residues 32 to 148 (LEIRADAHVR…NIPMTELTVT (117 aa)) enclose the Ig-like V-type domain. The Extracellular portion of the chain corresponds to 32–158 (LEIRADAHVR…ERGFGTMLSS (127 aa)). Cys52 and Cys128 are oxidised to a cystine. N-linked (GlcNAc...) asparagine glycosylation occurs at Asn123. A helical membrane pass occupies residues 159–179 (VALLSILVFVPSAVVVALLLV). The Cytoplasmic portion of the chain corresponds to 180 to 235 (RMGRKAAGLKKRSRSGYKKSSIEVSDDTDQEEEEACMARLCVRCAECLDSDYEETY).

Belongs to the myelin P0 protein family.

The protein localises to the membrane. Its function is as follows. Mediates homophilic cell-cell adhesion. This chain is Myelin protein zero-like protein 3 (MPZL3), found in Homo sapiens (Human).